The chain runs to 333 residues: Protein 2 (333 aa).

2 disordered regions span residues 1–41 (MTGR…SENA) and 57–84 (LGAG…LPPT). Residues 24-33 (QETTKQTTSA) are compositionally biased toward polar residues. Positions 62–79 (DYDETEADPADTYGDTEA) are enriched in acidic residues.

This Lactuca sativa (Garden lettuce) protein is Protein 2.